Reading from the N-terminus, the 483-residue chain is Zinc metalloproteinase/disintegrin (483 aa).

A signal peptide spans 1-20 (MIQVLLVTLCLAAFPYQGSS). Positions 21–190 (IILESGNVND…KKASQLNLTP (170 aa)) are excised as a propeptide. The Peptidase M12B domain occupies 198 to 394 (RYIELVVVAD…HNPQCMLNEP (197 aa)). Ca(2+) is bound by residues Glu-201 and Asp-285. Cystine bridges form between Cys-309–Cys-389, Cys-349–Cys-373, and Cys-351–Cys-356. His-334 contributes to the Zn(2+) binding site. The active site involves Glu-335. Zn(2+) contacts are provided by His-338 and His-344. Residues Cys-389 and Asn-392 each contribute to the Ca(2+) site. Positions 395-418 (LRTDIVSTPVSGNELLETGEESDF) are excised as a propeptide. One can recognise a Disintegrin domain in the interval 402–483 (TPVSGNELLE…AGCPRNPFHA (82 aa)). Intrachain disulfides connect Cys-425–Cys-448, Cys-439–Cys-445, Cys-444–Cys-469, and Cys-457–Cys-476. A Cell attachment site motif is present at residues 461-463 (RGD).

It belongs to the venom metalloproteinase (M12B) family. P-II subfamily. P-IId sub-subfamily. As to quaternary structure, homodimer; disulfide-linked (disintegrin). The cofactor is Zn(2+). Expressed by the venom gland.

It is found in the secreted. Functionally, impairs hemostasis in the envenomed animal. This protein has not been identified in the venom. Inhibits ADP-induced platelet aggregation. Binds and inhibits integrins GPIIb/GPIIIa (ITGA2B/ITGB3), alpha-5/beta-1 (ITGA5/ITGB1), alpha-V/beta-3 (ITGAV/ITGB3), and alpha-V/beta-5 (ITGAV/ITGB5). It blocks cancer cell adhesion (tested on human breast cancer cell line MDA-MB-435) to fibronectin and vitronectin and thus prevents invasion of cancer cells. This chain is Zinc metalloproteinase/disintegrin, found in Agkistrodon contortrix contortrix (Southern copperhead).